We begin with the raw amino-acid sequence, 238 residues long: Succinate dehydrogenase iron-sulfur subunit (238 aa).

Residues 1 to 97 (MKLEFSIYRY…KIVIRPLPGL (97 aa)) form the 2Fe-2S ferredoxin-type domain. [2Fe-2S] cluster is bound by residues Cys-55, Cys-60, and Cys-75. In terms of domain architecture, 4Fe-4S ferredoxin-type spans 139–169 (QREKLDGLYECILCACCSTSCPSFWWNPDKF). [4Fe-4S] cluster contacts are provided by Cys-149, Cys-152, and Cys-155. A [3Fe-4S] cluster-binding site is contributed by Cys-159. Trp-164 contacts a ubiquinone. Residues Cys-206 and Cys-212 each coordinate [3Fe-4S] cluster. Cys-216 contributes to the [4Fe-4S] cluster binding site.

It belongs to the succinate dehydrogenase/fumarate reductase iron-sulfur protein family. In terms of assembly, part of an enzyme complex containing four subunits: a flavoprotein, an iron-sulfur, cytochrome b-556, and a hydrophobic anchor protein. [2Fe-2S] cluster serves as cofactor. The cofactor is [3Fe-4S] cluster. It depends on [4Fe-4S] cluster as a cofactor.

It carries out the reaction a quinone + succinate = fumarate + a quinol. Its pathway is carbohydrate metabolism; tricarboxylic acid cycle; fumarate from succinate (bacterial route): step 1/1. In terms of biological role, two distinct, membrane-bound, FAD-containing enzymes are responsible for the catalysis of fumarate and succinate interconversion; the fumarate reductase is used in anaerobic growth, and the succinate dehydrogenase is used in aerobic growth. The polypeptide is Succinate dehydrogenase iron-sulfur subunit (sdhB) (Salmonella typhimurium (strain LT2 / SGSC1412 / ATCC 700720)).